Here is a 282-residue protein sequence, read N- to C-terminus: Armadillo repeat-containing protein 1 (282 aa).

Residue Met1 is modified to N-acetylmethionine. One copy of the ARM repeat lies at 39 to 81; it reads GCLPGLILFMDHPNPPVVHSALLALRYLAECRANREKMKGELG. Thr137 bears the Phosphothreonine mark. Phosphoserine occurs at positions 189, 246, 260, and 267. The interval 239–261 is disordered; sequence DYLPEDESPTKEQDKAVSRVGSH. Residues 246-255 show a composition bias toward basic and acidic residues; that stretch reads SPTKEQDKAV.

As to quaternary structure, interacts with mitochondrial contact site and cristae organizing system (MICOS) complex components IMMT/MIC60 and MICOS10/MIC10. Interacts with mitochondrial outer membrane sorting assembly machinery (SAM) complex components SAMM50 and MTX1.

The protein localises to the cytoplasm. Its subcellular location is the mitochondrion. It is found in the mitochondrion outer membrane. Its function is as follows. In association with mitochondrial contact site and cristae organizing system (MICOS) complex components and mitochondrial outer membrane sorting assembly machinery (SAM) complex components may regulate mitochondrial dynamics playing a role in determining mitochondrial length, distribution and motility. The chain is Armadillo repeat-containing protein 1 (ARMC1) from Bos taurus (Bovine).